The sequence spans 94 residues: Large ribosomal subunit protein eL36 (94 aa).

Positions Met-1–Gly-25 are enriched in basic residues. Residues Met-1–Thr-30 are disordered.

Belongs to the eukaryotic ribosomal protein eL36 family. In terms of assembly, component of the large ribosomal subunit.

Its subcellular location is the cytoplasm. The chain is Large ribosomal subunit protein eL36 (RPL36) from Encephalitozoon cuniculi (strain GB-M1) (Microsporidian parasite).